A 212-amino-acid chain; its full sequence is Thymidylate kinase (212 aa).

Position 11-18 (11-18 (GPEGAGKT)) interacts with ATP.

This sequence belongs to the thymidylate kinase family.

The catalysed reaction is dTMP + ATP = dTDP + ADP. In terms of biological role, phosphorylation of dTMP to form dTDP in both de novo and salvage pathways of dTTP synthesis. The sequence is that of Thymidylate kinase from Streptococcus pneumoniae (strain Taiwan19F-14).